Here is a 270-residue protein sequence, read N- to C-terminus: Structure-specific endonuclease subunit SLX1 (270 aa).

Residues 9-94 enclose the GIY-YIG domain; it reads RFFGVYLLYC…PQASRRLTHV (86 aa). The segment at 182–234 adopts an SLX1-type zinc-finger fold; the sequence is CSLCARLLQDEEGPLCCPHPGCPLRAHIICLAEEFLQEEPGQLLPLEGHCPSC.

This sequence belongs to the SLX1 family. Forms a heterodimer with SLX4. A divalent metal cation is required as a cofactor. Expressed in testis, colon, bone marrow, brain, thymus and to a lesser extent in heart, kidney, skeletal muscle and spleen.

It is found in the nucleus. Its function is as follows. Catalytic subunit of the SLX1-SLX4 structure-specific endonuclease that resolves DNA secondary structures generated during DNA repair and recombination. Has endonuclease activity towards branched DNA substrates, introducing single-strand cuts in duplex DNA close to junctions with ss-DNA. Has a preference for 5'-flap structures, and promotes symmetrical cleavage of static and migrating Holliday junctions (HJs). Resolves HJs by generating two pairs of ligatable, nicked duplex products. This chain is Structure-specific endonuclease subunit SLX1 (Slx1b), found in Mus musculus (Mouse).